Here is a 199-residue protein sequence, read N- to C-terminus: NADH-quinone oxidoreductase subunit C (199 aa).

It belongs to the complex I 30 kDa subunit family. NDH-1 is composed of 14 different subunits. Subunits NuoB, C, D, E, F, and G constitute the peripheral sector of the complex.

The protein resides in the cell inner membrane. It catalyses the reaction a quinone + NADH + 5 H(+)(in) = a quinol + NAD(+) + 4 H(+)(out). Its function is as follows. NDH-1 shuttles electrons from NADH, via FMN and iron-sulfur (Fe-S) centers, to quinones in the respiratory chain. The immediate electron acceptor for the enzyme in this species is believed to be ubiquinone. Couples the redox reaction to proton translocation (for every two electrons transferred, four hydrogen ions are translocated across the cytoplasmic membrane), and thus conserves the redox energy in a proton gradient. This Rhodobacter capsulatus (Rhodopseudomonas capsulata) protein is NADH-quinone oxidoreductase subunit C.